The primary structure comprises 333 residues: S-adenosylmethionine-dependent nucleotide dehydratase (333 aa).

One can recognise a Radical SAM core domain in the interval 1-239; it reads MNIKTIVINW…SAPQKQNNVI (239 aa). Positions 16, 20, and 23 each coordinate [4Fe-4S] cluster.

The protein belongs to the radical SAM superfamily. Viperin family. [4Fe-4S] cluster is required as a cofactor.

It carries out the reaction GTP + AH2 + S-adenosyl-L-methionine = 3'-deoxy-3',4'-didehydro-GTP + 5'-deoxyadenosine + L-methionine + A + H2O + H(+). Its function is as follows. Expression of pVip56 in E.coli (strain MG1655) confers resistance to phage P1; has no effect against T7. Catalyzes the conversion of guanosine triphosphate (GTP) to 3'-deoxy-3',4'-didehydro-GTP (ddhGTP), probably via a SAM-dependent radical mechanism. The modified nucleotide represses transcription from T7 RNA polymerase-directed genes (possibly by acting as chain terminators), strongly suggesting these nucleotides block viral polymerase transcription. How this protein allows bacteria to resist viruses that do not encode their own RNA polymerase (such as lambda, P1) is unknown. The polypeptide is S-adenosylmethionine-dependent nucleotide dehydratase (Fibrobacter sp. (strain UWH6)).